A 907-amino-acid chain; its full sequence is MKSSEIRNAFIKYFEKNGHKVVPSSSLIPENDPTLLFANAGMNQFKNTFLGLEKRDYSRAVTAQKCVRAGGKHNDLENVGFTARHHTFFEMVGNFSFGDYFKKDAIHFAWEFLTKELAIPKEKLYVTVHISDDEAADIWHNQEGVPRERIFRFDKDNFWKMGDTGPCGPCTEIFYDHGPKAGTISDPFKGIEAGEDRFVEIWNLVFMQYFENPPGTLTPLPKPSVDTGGGLERMSAAMQGVFNNYDTDLFQPMIQLACKIGNIEYISDKEVLAKNPAAAEVTSALRVLADHCRSTSFLIADGALPSNEGRGYVLRRIMRRAIRYGRKLSADKSFLPGMAEALIESMGSVYPELKTRRDHILNTIRDEEDRFIATLDKGTAILEDELKKAKSKGIKELSGEVVFRMYDTYGFPADLTRVIANEQGIEVNEAAFEKEMEDNRAKSKASWKGKSMGADEAHMIKFAKDYLQSGKSVTFLGYEGTIGDGKVMGLSNGQAEVQELKTGDTGLMILNATTFYGEGGGQSGDVGYIMHDTNRARVINTTKIDDIVLHHVEIEHGSFKVGTAVVTGVDPVERRNTAANHSATHLLHAALRKVLGTHVTQAGSLVDSQKTRFDFTHNKPVSSEEIKKIEDLVNEQIARCNPVQTEMMSHKAALEKGAMALFGEKYASDVRVLTMGDFSCELCGGTHVKNTSEIRLFKIVSEAGVSSGVRRIEAITADNALQYMMSAVTHLDDALAAAGFQKSPHYIKHLETTGETATLANRVESLKDQVKQLEKEMKKLQGGQVNVDDLAANALTFKTKAGASAKLVLADVPLDDRQVLAEVTDHLKNKIQSGIVVVVGQGDGSHPIIVSVSKEISGETKAGDLLKEVAGVMGGKGGGRPDFAQGAAPNRAQLNEAFSKVKSMLGL.

His581, His585, Cys683, and His687 together coordinate Zn(2+).

The protein belongs to the class-II aminoacyl-tRNA synthetase family. It depends on Zn(2+) as a cofactor.

The protein resides in the cytoplasm. It catalyses the reaction tRNA(Ala) + L-alanine + ATP = L-alanyl-tRNA(Ala) + AMP + diphosphate. Functionally, catalyzes the attachment of alanine to tRNA(Ala) in a two-step reaction: alanine is first activated by ATP to form Ala-AMP and then transferred to the acceptor end of tRNA(Ala). Also edits incorrectly charged Ser-tRNA(Ala) and Gly-tRNA(Ala) via its editing domain. This chain is Alanine--tRNA ligase, found in Bdellovibrio bacteriovorus (strain ATCC 15356 / DSM 50701 / NCIMB 9529 / HD100).